A 799-amino-acid polypeptide reads, in one-letter code: Protein translocase subunit SecA (799 aa).

ATP is bound by residues Gln-85, 103-107, and Asp-504; that span reads GEGKT.

It belongs to the SecA family. As to quaternary structure, monomer and homodimer. Part of the essential Sec protein translocation apparatus which comprises SecA, SecYEG and auxiliary proteins SecDF. Other proteins may also be involved.

Its subcellular location is the cell membrane. It localises to the cytoplasm. The enzyme catalyses ATP + H2O + cellular proteinSide 1 = ADP + phosphate + cellular proteinSide 2.. In terms of biological role, part of the Sec protein translocase complex. Interacts with the SecYEG preprotein conducting channel. Has a central role in coupling the hydrolysis of ATP to the transfer of proteins into and across the cell membrane, serving as an ATP-driven molecular motor driving the stepwise translocation of polypeptide chains across the membrane. The polypeptide is Protein translocase subunit SecA (Lactobacillus acidophilus (strain ATCC 700396 / NCK56 / N2 / NCFM)).